The following is a 358-amino-acid chain: Ganglioside-induced differentiation-associated protein 1 (358 aa).

A GST N-terminal domain is found at 24-105 (VKLILYHWTH…YLEQTFLDEK (82 aa)). Glycyl lysine isopeptide (Lys-Gly) (interchain with G-Cter in ubiquitin) cross-links involve residues K50, K172, K173, K188, and K190. Residues 153 to 309 (PAYATTRIRS…LISAVLPTAF (157 aa)) form the GST C-terminal domain. Residue K203 is modified to N6-acetyllysine; alternate. A Glycyl lysine isopeptide (Lys-Gly) (interchain with G-Cter in ubiquitin); alternate cross-link involves residue K203. Residues K206, K207, and K214 each participate in a glycyl lysine isopeptide (Lys-Gly) (interchain with G-Cter in ubiquitin) cross-link. A run of 2 helical transmembrane segments spans residues 292–312 (VLGH…FRVA) and 320–340 (LGTT…FMLF). Residues 320 to 358 (LGTTLVVGLLAGMGYFAFMLFRKRLGSMILALRPRPNYF) form a required for mitochondrial localization region.

It belongs to the GST superfamily. In terms of assembly, homodimer. Ubiquitinated by PRKN during mitophagy, leading to its degradation and enhancement of mitophagy. Deubiquitinated by USP30.

It localises to the mitochondrion outer membrane. It is found in the cytoplasm. Regulates the mitochondrial network by promoting mitochondrial fission. The sequence is that of Ganglioside-induced differentiation-associated protein 1 (GDAP1) from Bos taurus (Bovine).